Reading from the N-terminus, the 106-residue chain is Nucleoid-associated protein Exig_0019 (106 aa).

Residues 1-16 show a composition bias toward low complexity; that stretch reads MRGMGNMNNMMKQMQK. Positions 1–23 are disordered; the sequence is MRGMGNMNNMMKQMQKMQKDMAK.

The protein belongs to the YbaB/EbfC family. In terms of assembly, homodimer.

The protein localises to the cytoplasm. It is found in the nucleoid. In terms of biological role, binds to DNA and alters its conformation. May be involved in regulation of gene expression, nucleoid organization and DNA protection. This Exiguobacterium sibiricum (strain DSM 17290 / CCUG 55495 / CIP 109462 / JCM 13490 / 255-15) protein is Nucleoid-associated protein Exig_0019.